We begin with the raw amino-acid sequence, 284 residues long: Homeobox protein SIX1 (284 aa).

Residues 124–183 constitute a DNA-binding region (homeobox); it reads GEETSYCFKEKSRGVLREWYAHNPYPSPREKRELAEATGLTTTQVSNWFKNRRQRDRAAE. The interval 168–284 is disordered; sequence VSNWFKNRRQ…LTSSLVDLGS (117 aa). A compositionally biased stretch (basic and acidic residues) spans 179 to 190; sequence DRAAEAKERENT. The span at 227 to 284 shows a compositional bias: polar residues; that stretch reads DQNSVLLLQSNMGHARSSNYSLPGLTASQPSHGLQAHQHQLQDSLLGPLTSSLVDLGS.

It belongs to the SIX/Sine oculis homeobox family. In terms of assembly, interacts with DACH1. Interacts with EYA1. Interacts with EYA2. Interacts with CDH1. Interacts with TBX18. Interacts with CEBPA. Interacts with CEBPB. Interacts with EBF2. Phosphorylated during interphase; becomes hyperphosphorylated during mitosis. Hyperphosphorylation impairs binding to promoter elements. In terms of processing, ubiquitinated by the anaphase promoting complex (APC), leading to its proteasomal degradation. In terms of tissue distribution, expressed in phalangeal tendons and in skeletal muscle and in head and body mesenchyme.

Its subcellular location is the nucleus. The protein localises to the cytoplasm. Its function is as follows. Transcription factor that is involved in the regulation of cell proliferation, apoptosis and embryonic development. Plays an important role in the development of several organs, including kidney, muscle and inner ear. Depending on context, functions as a transcriptional repressor or activator. Lacks an activation domain, and requires interaction with EYA family members for transcription activation. Mediates nuclear translocation of EYA1 and EYA2. Binds the 5'-TCA[AG][AG]TTNC-3' motif present in the MEF3 element in the MYOG promoter and CIDEA enhancer. Regulates the expression of numerous genes, including MYC, CCNA1, CCND1 and EZR. Acts as an activator of the IGFBP5 promoter, probably coactivated by EYA2. Repression of precursor cell proliferation in myoblasts is switched to activation through recruitment of EYA3 to the SIX1-DACH1 complex. During myogenesis, seems to act together with EYA2 and DACH2. Regulates the expression of CCNA1. Promotes brown adipocyte differentiation. In Mus musculus (Mouse), this protein is Homeobox protein SIX1 (Six1).